We begin with the raw amino-acid sequence, 510 residues long: UDP-N-acetylmuramoylalanine--D-glutamate ligase (510 aa).

Residue 138 to 144 (GTNGKTT) coordinates ATP. The disordered stretch occupies residues 294-316 (FDEPAPAPRRKKDAPPPTRAGGR).

Belongs to the MurCDEF family.

It localises to the cytoplasm. The catalysed reaction is UDP-N-acetyl-alpha-D-muramoyl-L-alanine + D-glutamate + ATP = UDP-N-acetyl-alpha-D-muramoyl-L-alanyl-D-glutamate + ADP + phosphate + H(+). It participates in cell wall biogenesis; peptidoglycan biosynthesis. Cell wall formation. Catalyzes the addition of glutamate to the nucleotide precursor UDP-N-acetylmuramoyl-L-alanine (UMA). This is UDP-N-acetylmuramoylalanine--D-glutamate ligase from Bordetella pertussis (strain Tohama I / ATCC BAA-589 / NCTC 13251).